Here is a 526-residue protein sequence, read N- to C-terminus: 1,4-beta-D-glucan cellobiohydrolase B (526 aa).

The N-terminal stretch at 1–23 (MASSFQLYKALLFFSSLLSAVQA) is a signal peptide. Residues 24 to 458 (QKVGTQQAEV…SNIKFGPIGS (435 aa)) form a catalytic region. Residue E235 is the Nucleophile of the active site. Residue E240 is the Proton donor of the active site. N-linked (GlcNAc...) asparagine glycosylation is found at N293 and N400. Positions 459–490 (TFGNGGGSGPTTTVTTSTATSTTSSATSTATG) are ser/Thr-rich linker. The tract at residues 464–488 (GGSGPTTTVTTSTATSTTSSATSTA) is disordered. Residues 468 to 488 (PTTTVTTSTATSTTSSATSTA) are compositionally biased toward low complexity. Residues 490 to 526 (GQAQHWEQCGGNGWTGPTVCASPWACTVVNSWYSQCL) form the CBM1 domain. Cystine bridges form between C498-C515 and C509-C525.

The protein belongs to the glycosyl hydrolase 7 (cellulase C) family.

It is found in the secreted. The enzyme catalyses Hydrolysis of (1-&gt;4)-beta-D-glucosidic linkages in cellulose and cellotetraose, releasing cellobiose from the non-reducing ends of the chains.. Its function is as follows. The biological conversion of cellulose to glucose generally requires three types of hydrolytic enzymes: (1) Endoglucanases which cut internal beta-1,4-glucosidic bonds; (2) Exocellobiohydrolases that cut the disaccharide cellobiose from the non-reducing end of the cellulose polymer chain; (3) Beta-1,4-glucosidases which hydrolyze the cellobiose and other short cello-oligosaccharides to glucose. In Emericella nidulans (strain FGSC A4 / ATCC 38163 / CBS 112.46 / NRRL 194 / M139) (Aspergillus nidulans), this protein is 1,4-beta-D-glucan cellobiohydrolase B (cbhB).